A 977-amino-acid chain; its full sequence is Alanine--tRNA ligase (977 aa).

The disordered stretch occupies residues 512 to 535; sequence SQVDSKLQSSTPAGTGSYDSKQVS. Residues His618, His622, Cys720, and His724 each contribute to the Zn(2+) site.

The protein belongs to the class-II aminoacyl-tRNA synthetase family. Zn(2+) is required as a cofactor.

It is found in the cytoplasm. It catalyses the reaction tRNA(Ala) + L-alanine + ATP = L-alanyl-tRNA(Ala) + AMP + diphosphate. Its function is as follows. Catalyzes the attachment of alanine to tRNA(Ala) in a two-step reaction: alanine is first activated by ATP to form Ala-AMP and then transferred to the acceptor end of tRNA(Ala). Also edits incorrectly charged Ser-tRNA(Ala) and Gly-tRNA(Ala) via its editing domain. This is Alanine--tRNA ligase from Leptospira interrogans serogroup Icterohaemorrhagiae serovar Lai (strain 56601).